A 316-amino-acid polypeptide reads, in one-letter code: Golgi to ER traffic protein 2 (316 aa).

A disordered region spans residues 1 to 75; that stretch reads MATELSDAEK…SDEEVEKSTK (75 aa). Residues 1–167 lie on the Cytoplasmic side of the membrane; the sequence is MATELSDAEK…LKYYKFKVSK (167 aa). Residues 7–19 are compositionally biased toward basic and acidic residues; that stretch reads DAEKRKLLRERRQ. 2 stretches are compositionally biased toward polar residues: residues 22-48 and 56-65; these read FSNGGASSRLNKITGQQQNSFLSSTSV and PSGNKKSSNV. A helical membrane pass occupies residues 168 to 187; the sequence is LKSYIILIKWALLAPYVYFI. The Lumenal portion of the chain corresponds to 188 to 209; sequence MHPNPTVLQASNLLSQIVERSN. A helical membrane pass occupies residues 210–229; that stretch reads FFSIFTGLEIVFISIYYQML. The Cytoplasmic portion of the chain corresponds to 230-276; sequence KKLQRDNNVTATQNAGGILKYLTMIPEGILPIRNIQGKIGLALEYFD. A helical transmembrane segment spans residues 277–297; sequence VASMYVTDICFVLVLFGVMKY. At 298–316 the chain is on the lumenal side; that stretch reads YHSSFPISVPIEPPIAGIQ.

Belongs to the GET2 family. In terms of assembly, component of the Golgi to ER traffic (GET) complex, which is composed of GET1, GET2 and GET3. Within the complex, GET1 and GET2 form a heterotetramer which is stabilized by phosphatidylinositol binding and which binds to the GET3 homodimer.

The protein localises to the endoplasmic reticulum membrane. It localises to the golgi apparatus membrane. Required for the post-translational delivery of tail-anchored (TA) proteins to the endoplasmic reticulum. Together with GET1, acts as a membrane receptor for soluble GET3, which recognizes and selectively binds the transmembrane domain of TA proteins in the cytosol. The GET complex cooperates with the HDEL receptor ERD2 to mediate the ATP-dependent retrieval of resident ER proteins that contain a C-terminal H-D-E-L retention signal from the Golgi to the ER. The chain is Golgi to ER traffic protein 2 from Kluyveromyces lactis (strain ATCC 8585 / CBS 2359 / DSM 70799 / NBRC 1267 / NRRL Y-1140 / WM37) (Yeast).